Here is a 183-residue protein sequence, read N- to C-terminus: Peptidyl-tRNA hydrolase (183 aa).

Residue Tyr14 coordinates tRNA. The active-site Proton acceptor is His19. TRNA-binding residues include Tyr61, Asn63, and Asn109.

Belongs to the PTH family. In terms of assembly, monomer.

It is found in the cytoplasm. It carries out the reaction an N-acyl-L-alpha-aminoacyl-tRNA + H2O = an N-acyl-L-amino acid + a tRNA + H(+). Its function is as follows. Hydrolyzes ribosome-free peptidyl-tRNAs (with 1 or more amino acids incorporated), which drop off the ribosome during protein synthesis, or as a result of ribosome stalling. In terms of biological role, catalyzes the release of premature peptidyl moieties from peptidyl-tRNA molecules trapped in stalled 50S ribosomal subunits, and thus maintains levels of free tRNAs and 50S ribosomes. The sequence is that of Peptidyl-tRNA hydrolase from Aliarcobacter butzleri (strain RM4018) (Arcobacter butzleri).